A 97-amino-acid polypeptide reads, in one-letter code: Large ribosomal subunit protein bL28 (97 aa).

Belongs to the bacterial ribosomal protein bL28 family.

In Rickettsia prowazekii (strain Madrid E), this protein is Large ribosomal subunit protein bL28.